A 122-amino-acid chain; its full sequence is Large ribosomal subunit protein uL14 (122 aa).

Belongs to the universal ribosomal protein uL14 family. In terms of assembly, part of the 50S ribosomal subunit. Forms a cluster with proteins L3 and L19. In the 70S ribosome, L14 and L19 interact and together make contacts with the 16S rRNA in bridges B5 and B8.

Functionally, binds to 23S rRNA. Forms part of two intersubunit bridges in the 70S ribosome. This chain is Large ribosomal subunit protein uL14, found in Nocardioides sp. (strain ATCC BAA-499 / JS614).